Reading from the N-terminus, the 487-residue chain is 4-alpha-glucanotransferase (487 aa).

It belongs to the disproportionating enzyme family.

Its subcellular location is the cytoplasm. The catalysed reaction is Transfers a segment of a (1-&gt;4)-alpha-D-glucan to a new position in an acceptor, which may be glucose or a (1-&gt;4)-alpha-D-glucan.. In terms of biological role, catalyzes a disproportionation reaction in which single or multiple glucose units from oligosaccharides are transferred to the 4-hydroxyl group of acceptor sugars. Glucose, maltose and maltotriose can act as acceptor, whereas of the three only maltotriose can act as donor. The sequence is that of 4-alpha-glucanotransferase (malQ) from Clostridium butyricum.